Here is a 284-residue protein sequence, read N- to C-terminus: 4-diphosphocytidyl-2-C-methyl-D-erythritol kinase (284 aa).

The active site involves K14. 98–108 (PMGGGLGGGSS) serves as a coordination point for ATP. D140 is an active-site residue.

It belongs to the GHMP kinase family. IspE subfamily.

The catalysed reaction is 4-CDP-2-C-methyl-D-erythritol + ATP = 4-CDP-2-C-methyl-D-erythritol 2-phosphate + ADP + H(+). Its pathway is isoprenoid biosynthesis; isopentenyl diphosphate biosynthesis via DXP pathway; isopentenyl diphosphate from 1-deoxy-D-xylulose 5-phosphate: step 3/6. Catalyzes the phosphorylation of the position 2 hydroxy group of 4-diphosphocytidyl-2C-methyl-D-erythritol. The sequence is that of 4-diphosphocytidyl-2-C-methyl-D-erythritol kinase from Shewanella sp. (strain W3-18-1).